The sequence spans 1681 residues: Y' element ATP-dependent helicase protein 1 copy 2 (1681 aa).

Residues 683–860 (EIYMADTPSV…LQRIGLTGLA (178 aa)) form the Helicase ATP-binding domain. 696 to 703 (APPGYGKT) is a binding site for ATP. Residues 917-1066 (KLLLALFEIE…EFYGLESKKG (150 aa)) enclose the Helicase C-terminal domain. Residues 1140–1283 (ANASTNATTN…ATTTESTNAS (144 aa)) show a composition bias toward low complexity. The disordered stretch occupies residues 1140-1307 (ANASTNATTN…RFHPVTDINK (168 aa)). Residues 1284–1307 (AKEDANKDGNAEDNRFHPVTDINK) show a composition bias toward basic and acidic residues.

Belongs to the helicase family. Yeast subtelomeric Y' repeat subfamily.

In terms of biological role, catalyzes DNA unwinding and is involved in telomerase-independent telomere maintenance. This is Y' element ATP-dependent helicase protein 1 copy 2 (YRF1-2) from Saccharomyces cerevisiae (strain ATCC 204508 / S288c) (Baker's yeast).